A 271-amino-acid polypeptide reads, in one-letter code: Sec-independent protein translocase protein TatC (271 aa).

Transmembrane regions (helical) follow at residues 24–44 (ISVG…EQIF), 78–98 (FFAG…LFIA), 112–132 (FLFV…YFVF), 159–179 (LVIK…GLLL), and 215–235 (FTQV…IFFG). The disordered stretch occupies residues 247–271 (AAEEAQWAADHNVDDDDVDHPEHKA).

This sequence belongs to the TatC family. In terms of assembly, the Tat system comprises two distinct complexes: a TatABC complex, containing multiple copies of TatA, TatB and TatC subunits, and a separate TatA complex, containing only TatA subunits. Substrates initially bind to the TatABC complex, which probably triggers association of the separate TatA complex to form the active translocon.

It localises to the cell inner membrane. Part of the twin-arginine translocation (Tat) system that transports large folded proteins containing a characteristic twin-arginine motif in their signal peptide across membranes. Together with TatB, TatC is part of a receptor directly interacting with Tat signal peptides. The protein is Sec-independent protein translocase protein TatC of Magnetococcus marinus (strain ATCC BAA-1437 / JCM 17883 / MC-1).